The sequence spans 397 residues: uncharacterized protein (397 aa).

[4Fe-4S] cluster contacts are provided by C47, C53, C56, and C131. Residues Q235, F262, E282, and D328 each contribute to the S-adenosyl-L-methionine site. The active-site Nucleophile is C354.

Belongs to the class I-like SAM-binding methyltransferase superfamily. RNA M5U methyltransferase family.

This is an uncharacterized protein from Zymomonas mobilis subsp. mobilis (strain ATCC 31821 / ZM4 / CP4).